The following is a 433-amino-acid chain: Enolase (433 aa).

Q167 contacts (2R)-2-phosphoglycerate. Catalysis depends on E209, which acts as the Proton donor. Mg(2+) contacts are provided by D246, E291, and D318. K343, R372, S373, and K394 together coordinate (2R)-2-phosphoglycerate. The active-site Proton acceptor is K343.

Belongs to the enolase family. As to quaternary structure, component of the RNA degradosome, a multiprotein complex involved in RNA processing and mRNA degradation. Mg(2+) is required as a cofactor.

The protein localises to the cytoplasm. It is found in the secreted. Its subcellular location is the cell surface. The enzyme catalyses (2R)-2-phosphoglycerate = phosphoenolpyruvate + H2O. It functions in the pathway carbohydrate degradation; glycolysis; pyruvate from D-glyceraldehyde 3-phosphate: step 4/5. In terms of biological role, catalyzes the reversible conversion of 2-phosphoglycerate (2-PG) into phosphoenolpyruvate (PEP). It is essential for the degradation of carbohydrates via glycolysis. The sequence is that of Enolase from Photobacterium profundum (strain SS9).